A 196-amino-acid polypeptide reads, in one-letter code: DnaA initiator-associating protein DiaA (196 aa).

Positions 34 to 196 constitute an SIS domain; sequence MVQSLLNGNK…DNTLFPHQND (163 aa).

The protein belongs to the SIS family. DiaA subfamily. Homotetramer; dimer of dimers.

Functionally, required for the timely initiation of chromosomal replication via direct interactions with the DnaA initiator protein. The sequence is that of DnaA initiator-associating protein DiaA from Pectobacterium atrosepticum (strain SCRI 1043 / ATCC BAA-672) (Erwinia carotovora subsp. atroseptica).